Here is a 362-residue protein sequence, read N- to C-terminus: Heme A synthase (362 aa).

5 helical membrane passes run alanine 12–glycine 32, valine 102–glycine 122, leucine 128–serine 148, valine 159–leucine 179, and alanine 198–leucine 218. Heme is bound at residue histidine 262. 3 helical membrane passes run methionine 264–tryptophan 281, glycine 289–leucine 309, and valine 312–valine 332. Position 320 (histidine 320) interacts with heme.

It belongs to the COX15/CtaA family. Type 2 subfamily. Interacts with CtaB. Requires heme b as cofactor.

The protein localises to the cell membrane. The catalysed reaction is Fe(II)-heme o + 2 A + H2O = Fe(II)-heme a + 2 AH2. It participates in porphyrin-containing compound metabolism; heme A biosynthesis; heme A from heme O: step 1/1. Functionally, catalyzes the conversion of heme O to heme A by two successive hydroxylations of the methyl group at C8. The first hydroxylation forms heme I, the second hydroxylation results in an unstable dihydroxymethyl group, which spontaneously dehydrates, resulting in the formyl group of heme A. This chain is Heme A synthase, found in Rhodopseudomonas palustris (strain BisB18).